We begin with the raw amino-acid sequence, 502 residues long: Actin-binding protein WASF3 (502 aa).

A coiled-coil region spans residues 57 to 93; it reads NEANNFYIRANSLQDRIDRLAVKVTQLDSTVEEVSLQ. Phosphotyrosine; by ABL1 is present on Y151. Positions 162–206 form a coiled coil; sequence KEKMLQDTEDKRKEKRRQKEQKRIDGTTREVKKVRKARNRRQEWN. Disordered stretches follow at residues 169–210 and 223–443; these read TEDK…MMAY and SVYH…ARSD. The span at 182–192 shows a compositional bias: basic and acidic residues; that stretch reads QKRIDGTTREV. A compositionally biased stretch (polar residues) spans 223 to 237; the sequence is SVYHGASSEGSLSPD. Residue Y248 is modified to Phosphotyrosine; by ABL1. Residues 302 to 312 are compositionally biased toward pro residues; it reads QQPPPPPPPQA. A Phosphotyrosine; by ABL1 modification is found at Y337. Pro residues-rich tracts occupy residues 341-352 and 394-410; these read SGPPPPPPPPVI and APPPPGPPPPPPGPPGP. Low complexity predominate over residues 411 to 423; sequence GSSLSSSPMHGPP. Residues 440–457 enclose the WH2 domain; that stretch reads ARSDLLAAIRMGIQLKKV. The residue at position 486 (Y486) is a Phosphotyrosine; by ABL1.

This sequence belongs to the SCAR/WAVE family. In terms of assembly, binds actin and the Arp2/3 complex. Phosphorylation by ABL1 promotes lamellipodia formation and cell migration. In terms of tissue distribution, expressed in ovary and brain.

The protein localises to the cytoplasm. The protein resides in the cytoskeleton. Its function is as follows. Downstream effector molecules involved in the transmission of signals from tyrosine kinase receptors and small GTPases to the actin cytoskeleton. Plays a role in the regulation of cell morphology and cytoskeletal organization. Required in the control of cell shape. This is Actin-binding protein WASF3 (WASF3) from Homo sapiens (Human).